The primary structure comprises 68 residues: Potassium channel toxin epsilon-KTx 1.2 (68 aa).

An N-terminal signal peptide occupies residues 1–26 (MKFSCGFLLIFLVLSAMIATFSEVEA). 4 disulfide bridges follow: C30-C38, C33-C54, C37-C47, and C42-C52. Y55 carries the tyrosine amide modification. A propeptide spanning residues 57 to 68 (RSDLNEEFENYQ) is cleaved from the precursor.

The protein belongs to the short scorpion toxin superfamily. Potassium channel inhibitor family. Epsilon-KTx 01 subfamily. As to expression, expressed by the venom gland.

Its subcellular location is the secreted. Its function is as follows. Potassium channel blocker. At 3 uM, this toxin blocks voltage-gated potassium channels rKv1.2/KCNA2 (5%), hKv1.3/KCNA3 (10%),rKv1.4/KCNA4 (20%), Kv11/hERG (24%), and Shaker-IR (27%). This chain is Potassium channel toxin epsilon-KTx 1.2, found in Tityus serrulatus (Brazilian scorpion).